The chain runs to 95 residues: Integration host factor subunit beta (95 aa).

It belongs to the bacterial histone-like protein family. As to quaternary structure, heterodimer of an alpha and a beta chain.

In terms of biological role, this protein is one of the two subunits of integration host factor, a specific DNA-binding protein that functions in genetic recombination as well as in transcriptional and translational control. This chain is Integration host factor subunit beta, found in Shewanella amazonensis (strain ATCC BAA-1098 / SB2B).